A 251-amino-acid chain; its full sequence is Dihydroorotate dehydrogenase B (NAD(+)), electron transfer subunit homolog (251 aa).

Positions 2-101 constitute an FAD-binding FR-type domain; it reads LAELNAEVLE…FLPLGKRLFS (100 aa). Residues C217, C222, C225, and C238 each coordinate [2Fe-2S] cluster.

The protein belongs to the PyrK family. Requires [2Fe-2S] cluster as cofactor. The cofactor is FAD.

The polypeptide is Dihydroorotate dehydrogenase B (NAD(+)), electron transfer subunit homolog (Aquifex aeolicus (strain VF5)).